The chain runs to 202 residues: Imidazoleglycerol-phosphate dehydratase (202 aa).

Belongs to the imidazoleglycerol-phosphate dehydratase family.

The protein resides in the cytoplasm. It catalyses the reaction D-erythro-1-(imidazol-4-yl)glycerol 3-phosphate = 3-(imidazol-4-yl)-2-oxopropyl phosphate + H2O. It functions in the pathway amino-acid biosynthesis; L-histidine biosynthesis; L-histidine from 5-phospho-alpha-D-ribose 1-diphosphate: step 6/9. The polypeptide is Imidazoleglycerol-phosphate dehydratase (Acinetobacter baylyi (strain ATCC 33305 / BD413 / ADP1)).